Consider the following 390-residue polypeptide: Flavohemoprotein (390 aa).

Serine 2 carries the N-acetylserine modification. A Globin domain is found at 12–149; that stretch reads PLTPTEINFL…LAQTLIDAEA (138 aa). Residue histidine 96 participates in heme b binding. Active-site charge relay system residues include tyrosine 106 and glutamate 148. The reductase stretch occupies residues 157–390; the sequence is WEEFKDFRVT…EFFGPTDPDC (234 aa). One can recognise an FAD-binding FR-type domain in the interval 158–263; sequence EEFKDFRVTK…HAPVGTMKYD (106 aa). Residues tyrosine 196 and 214–217 contribute to the FAD site; that span reads REYS. Residue 277-282 participates in NADP(+) binding; it reads GIGITP. 382 to 385 provides a ligand contact to FAD; it reads FFGP.

The protein belongs to the globin family. Two-domain flavohemoproteins subfamily. This sequence in the C-terminal section; belongs to the flavoprotein pyridine nucleotide cytochrome reductase family. Requires FAD as cofactor. Heme b serves as cofactor.

It localises to the cytoplasm. It carries out the reaction 2 nitric oxide + NADPH + 2 O2 = 2 nitrate + NADP(+) + H(+). It catalyses the reaction 2 nitric oxide + NADH + 2 O2 = 2 nitrate + NAD(+) + H(+). Its function is as follows. Is involved in NO detoxification in an aerobic process, termed nitric oxide dioxygenase (NOD) reaction that utilizes O(2) and NAD(P)H to convert NO to nitrate, which protects the fungus from various noxious nitrogen compounds. Therefore, plays a central role in the inducible response to nitrosative stress. In terms of biological role, in the presence of oxygen and NADH, it has NADH oxidase activity, which leads to the generation of superoxide and H(2)O(2). Under anaerobic conditions, it also exhibits nitric oxide reductase and FAD reductase activities. However, all these reactions are much lower than NOD activity. In Candida norvegensis (Yeast), this protein is Flavohemoprotein.